The sequence spans 224 residues: Tumor protein D52 (224 aa).

A disordered region spans residues 29–53 (LSPSGNTSPPGSPTQNVGLLKTEPV). T35 carries the post-translational modification Phosphothreonine. A phosphoserine mark is found at S36 and S40. The stretch at 61 to 113 (VTMLSAPEALTEEEQEELRRELTKVEEEIQTLSQVLAAKEKHLAELKRKLGIS) forms a coiled coil. T138, S175, and S223 each carry phosphoserine. The segment at 186-224 (KVGGAKPAGGDFGEVLNSTANATSTMTTEPPPEQMTESP) is disordered. Residues 202 to 224 (NSTANATSTMTTEPPPEQMTESP) are compositionally biased toward low complexity.

The protein belongs to the TPD52 family. In terms of assembly, forms a homodimer or heterodimer with other members of the family. As to expression, isoform 2 is expressed at higher levels in kidney and brain than in liver, lung, testis and heart. Within the brain, isoform 2 is highly expressed in the granular layer of the cerebellum, the cortex and the hippocampus. In embryos, isoform 2 is expressed in the epithelium of the developing intestine, stomach, olfactory epithelium, neuronal layers of the retina, salivary gland, kidney and dorsal root ganglion.

The sequence is that of Tumor protein D52 (Tpd52) from Mus musculus (Mouse).